The chain runs to 206 residues: A-type ATP synthase subunit E (206 aa).

Belongs to the V-ATPase E subunit family. Has multiple subunits with at least A(3), B(3), C, D, E, F, H, I and proteolipid K(x).

Its subcellular location is the cell membrane. Its function is as follows. Component of the A-type ATP synthase that produces ATP from ADP in the presence of a proton gradient across the membrane. In Methanothermobacter thermautotrophicus (strain ATCC 29096 / DSM 1053 / JCM 10044 / NBRC 100330 / Delta H) (Methanobacterium thermoautotrophicum), this protein is A-type ATP synthase subunit E.